Here is a 183-residue protein sequence, read N- to C-terminus: Proton-transporting V-type ATPase complex assembly regulator TMEM9 (183 aa).

A signal peptide spans 1-20 (MKLLSLVAVVGCLLVPPAEA). 3 N-linked (GlcNAc...) asparagine glycosylation sites follow: asparagine 21, asparagine 38, and asparagine 47. At 21 to 89 (NKSSEDIRCK…YEERSTTTIK (69 aa)) the chain is on the extracellular side. A helical membrane pass occupies residues 90 to 110 (VIIVIYLSVVGALLLYMAFLM). Over 111-183 (LVDPLIRKPD…TVFDRHKMLS (73 aa)) the chain is Cytoplasmic. Serine 137 and serine 144 each carry phosphoserine.

Belongs to the TMEM9 family. As to quaternary structure, interacts with the v-ATPase accessory protein ATP6AP2 and with the v-ATPase complex subunit ATP6V0D1; these interactions lead to the assembly of the v-ATPase complex. In terms of processing, N-glycosylated. Highly expressed in adrenal gland, thyroid gland, testis, ovary and prostate. Moderate expression in trachea, spinal cord, stomach, colon, small intestine and spleen. Low expression in bone marrow, lymph node, thymus and peripheral blood lymphocytes. Expression is detected in hematopoietic cell lines including those of myeloid, erythroid, B- and T-cell origin.

Its subcellular location is the lysosome membrane. The protein localises to the late endosome membrane. It localises to the endosome. The protein resides in the multivesicular body membrane. In terms of biological role, transmembrane protein that binds to and facilitates the assembly of lysosomal proton-transporting V-type ATPase (v-ATPase), resulting in enhanced lysosomal acidification and trafficking. By bringing the v-ATPase accessory protein ATP6AP2 and the v-ATPase subunit ATP6V0D1 together, allows v-ATPase complex formation and activation. TMEM9-controlled vesicular acidification induces hyperactivation of Wnt/beta-catenin signaling, involved in development, tissue homeostasis and tissue regeneration, through lysosomal degradation of adenomatous polyposis coli/APC. In the liver, involved in hepatic regeneration. The sequence is that of Proton-transporting V-type ATPase complex assembly regulator TMEM9 from Homo sapiens (Human).